We begin with the raw amino-acid sequence, 259 residues long: Phosphatidylglycerol--prolipoprotein diacylglyceryl transferase (259 aa).

The next 4 helical transmembrane spans lie at 9-29, 55-75, 92-112, and 117-137; these read IIFY…VVGI, FITY…VLLY, EGGM…YLFC, and VNFL…LFLG. Arginine 138 is a binding site for a 1,2-diacyl-sn-glycero-3-phospho-(1'-sn-glycerol). The next 3 helical transmembrane spans lie at 172–192, 201–221, and 228–248; these read QLYE…YATF, GLNS…IEIF, and IGFI…MLIL.

It belongs to the Lgt family.

The protein localises to the cell inner membrane. It catalyses the reaction L-cysteinyl-[prolipoprotein] + a 1,2-diacyl-sn-glycero-3-phospho-(1'-sn-glycerol) = an S-1,2-diacyl-sn-glyceryl-L-cysteinyl-[prolipoprotein] + sn-glycerol 1-phosphate + H(+). Its pathway is protein modification; lipoprotein biosynthesis (diacylglyceryl transfer). Functionally, catalyzes the transfer of the diacylglyceryl group from phosphatidylglycerol to the sulfhydryl group of the N-terminal cysteine of a prolipoprotein, the first step in the formation of mature lipoproteins. This Rickettsia akari (strain Hartford) protein is Phosphatidylglycerol--prolipoprotein diacylglyceryl transferase.